Here is a 623-residue protein sequence, read N- to C-terminus: Methionine--tRNA ligase (623 aa).

The 'HIGH' region motif lies at 11–21; the sequence is PYANGPRHIGH. Zn(2+)-binding residues include Cys143, Cys146, Cys156, and Cys159. The 'KMSKS' region signature appears at 347 to 351; it reads KFSSS. Ser350 is an ATP binding site.

It belongs to the class-I aminoacyl-tRNA synthetase family. MetG type 1 subfamily. In terms of assembly, monomer. The cofactor is Zn(2+).

Its subcellular location is the cytoplasm. The catalysed reaction is tRNA(Met) + L-methionine + ATP = L-methionyl-tRNA(Met) + AMP + diphosphate. Its function is as follows. Is required not only for elongation of protein synthesis but also for the initiation of all mRNA translation through initiator tRNA(fMet) aminoacylation. This Bifidobacterium animalis subsp. lactis (strain AD011) protein is Methionine--tRNA ligase.